The sequence spans 593 residues: Pentatricopeptide repeat-containing protein At5g24830 (593 aa).

12 PPR repeats span residues 120 to 154, 155 to 189, 190 to 224, 225 to 256, 264 to 298, 299 to 333, 334 to 368, 369 to 403, 404 to 438, 439 to 473, 474 to 508, and 509 to 543; these read CLSIHSSIMRDLCLQGKLDAALWLRKKMIYSGVIP, GLITHNHLLNGLCKAGYIEKADGLVREMREMGPSP, NCVSYNTLIKGLCSVNNVDKALYLFNTMNKYGIRP, NRVTCNIIVHALCQKGVIGNNNKKLLEEILDS, DIVICTILMDSCFKNGNVVQALEVWKEMSQKNVPA, DSVVYNVIIRGLCSSGNMVAAYGFMCDMVKRGVNP, DVFTYNTLISALCKEGKFDEACDLHGTMQNGGVAP, DQISYKVIIQGLCIHGDVNRANEFLLSMLKSSLLP, EVLLWNVVIDGYGRYGDTSSALSVLNLMLSYGVKP, NVYTNNALIHGYVKGGRLIDAWWVKNEMRSTKIHP, DTTTYNLLLGAACTLGHLRLAFQLYDEMLRRGCQP, and DIITYTELVRGLCWKGRLKKAESLLSRIQATGITI.

This sequence belongs to the PPR family. P subfamily.

This is Pentatricopeptide repeat-containing protein At5g24830 from Arabidopsis thaliana (Mouse-ear cress).